The primary structure comprises 40 residues: MKVRASIKSLKNQPGAQVVRRRGRVYVINKLNPRFEGLQG.

It belongs to the bacterial ribosomal protein bL36 family.

The polypeptide is Large ribosomal subunit protein bL36B (Leifsonia xyli subsp. xyli (strain CTCB07)).